A 362-amino-acid chain; its full sequence is Methylthioribose-1-phosphate isomerase (362 aa).

D252 acts as the Proton donor in catalysis.

It belongs to the eIF-2B alpha/beta/delta subunits family. MtnA subfamily.

The protein localises to the cytoplasm. It is found in the nucleus. It carries out the reaction 5-(methylsulfanyl)-alpha-D-ribose 1-phosphate = 5-(methylsulfanyl)-D-ribulose 1-phosphate. It functions in the pathway amino-acid biosynthesis; L-methionine biosynthesis via salvage pathway; L-methionine from S-methyl-5-thio-alpha-D-ribose 1-phosphate: step 1/6. Its function is as follows. Catalyzes the interconversion of methylthioribose-1-phosphate (MTR-1-P) into methylthioribulose-1-phosphate (MTRu-1-P). The chain is Methylthioribose-1-phosphate isomerase from Drosophila mojavensis (Fruit fly).